The following is a 463-amino-acid chain: HEPACAM family member 2 (463 aa).

Residues 1–32 (MGQDAFMELLRSMVGLSLCKIHLLLIAGSCLG) form the signal peptide. Residues N86, N130, and N166 are each glycosylated (N-linked (GlcNAc...) asparagine). Ig-like C2-type domains follow at residues 150 to 234 (PMVQ…SDII) and 236 to 332 (PTIY…TRFT). Intrachain disulfides connect C171-C220 and C271-C316. The N-linked (GlcNAc...) asparagine glycan is linked to N321. Residues 353-373 (LASITGISLFLIISMCLLFLW) traverse the membrane as a helical segment. Topologically, residues 374–463 (KKYQPYKAIR…IPEQQQENTE (90 aa)) are cytoplasmic.

Post-translationally, poly-ADP-ribosylated (PARsylated) by tankyrase TNKS during late G2 and prophase, leading to translocation to mitotic centrosomes. N-glycosylated.

Its subcellular location is the golgi apparatus membrane. The protein localises to the cytoplasm. It localises to the cytoskeleton. The protein resides in the spindle. It is found in the microtubule organizing center. Its subcellular location is the centrosome. The protein localises to the midbody. Required during prometaphase for centrosome maturation. Following poly-ADP-ribosylation (PARsylation) by TNKS, translocates from the Golgi apparatus to mitotic centrosomes and plays a key role in the formation of robust microtubules for prompt movement of chromosomes: anchors AKAP9/CG-NAP, a scaffold protein of the gamma-tubulin ring complex and promotes centrosome maturation. The chain is HEPACAM family member 2 (Hepacam2) from Mus musculus (Mouse).